Reading from the N-terminus, the 252-residue chain is Thiazole synthase (252 aa).

Lys-95 acts as the Schiff-base intermediate with DXP in catalysis. Residues Gly-156, Ala-182–Gly-183, and Asn-204–Thr-205 each bind 1-deoxy-D-xylulose 5-phosphate.

Belongs to the ThiG family. As to quaternary structure, homotetramer. Forms heterodimers with either ThiH or ThiS.

It is found in the cytoplasm. The enzyme catalyses [ThiS sulfur-carrier protein]-C-terminal-Gly-aminoethanethioate + 2-iminoacetate + 1-deoxy-D-xylulose 5-phosphate = [ThiS sulfur-carrier protein]-C-terminal Gly-Gly + 2-[(2R,5Z)-2-carboxy-4-methylthiazol-5(2H)-ylidene]ethyl phosphate + 2 H2O + H(+). The protein operates within cofactor biosynthesis; thiamine diphosphate biosynthesis. Its function is as follows. Catalyzes the rearrangement of 1-deoxy-D-xylulose 5-phosphate (DXP) to produce the thiazole phosphate moiety of thiamine. Sulfur is provided by the thiocarboxylate moiety of the carrier protein ThiS. In vitro, sulfur can be provided by H(2)S. The chain is Thiazole synthase from Shewanella sp. (strain ANA-3).